The primary structure comprises 120 residues: Jacalin-related lectin 39 (120 aa).

Residues S6–N120 enclose the Jacalin-type lectin domain.

The protein belongs to the jacalin lectin family.

This chain is Jacalin-related lectin 39 (JAL39), found in Arabidopsis thaliana (Mouse-ear cress).